A 140-amino-acid chain; its full sequence is Putative nickel-responsive regulator 3 (140 aa).

Ni(2+) contacts are provided by H81, H92, H94, and C100.

The protein belongs to the transcriptional regulatory CopG/NikR family. Ni(2+) is required as a cofactor.

In terms of biological role, transcriptional regulator. This is Putative nickel-responsive regulator 3 from Methanosarcina mazei (strain ATCC BAA-159 / DSM 3647 / Goe1 / Go1 / JCM 11833 / OCM 88) (Methanosarcina frisia).